The sequence spans 429 residues: Serine/threonine-protein kinase BGLF4 (429 aa).

The interval 1–27 (MDVNMAAELSPTNSSSSGELSVSPEPP) is disordered. The Protein kinase domain occupies 1–409 (MDVNMAAELS…CRPRFEHPHL (409 aa)). Positions 14–23 (SSSSGELSVS) are enriched in low complexity. The SUMO interaction motif stretch occupies residues 36-40 (KVTVI). ATP contacts are provided by residues 110 to 118 (LYHELMVCD) and glutamate 128. Aspartate 195 acts as the Proton acceptor in catalysis. The SUMO interaction motif stretch occupies residues 344–350 (VVLLEVL).

The protein belongs to the protein kinase superfamily. Ser/Thr protein kinase family. In terms of assembly, interacts with host NUP62 and NUP153; this interaction plays a role in nuclear targeting of BGLF4. Interacts with host SUMO1 and SUMO2.

It localises to the virion tegument. The protein resides in the host nucleus. The enzyme catalyses L-seryl-[protein] + ATP = O-phospho-L-seryl-[protein] + ADP + H(+). It carries out the reaction L-threonyl-[protein] + ATP = O-phospho-L-threonyl-[protein] + ADP + H(+). Plays many key roles by phosphorylating several proteins including the viral DNA processivity factor BMRF1, EBNA1 or EBNA2. Modifies the host nuclear envelope structure and induces the redistribution of nuclear envelope-associated proteins by phosphorylating host nucleoporins. Subsequently, promotes the nuclear transport of EBV lytic proteins. Required for efficient lytic DNA replication and release of nucleocapsids from the nucleus. Contributes to the compaction of host cell chromatin in cells undergoing lytic replication, presumably by phosphorylating the host condensin complex and host TOP2A. Induces disassembly of the nuclear lamina by phosphorylating with host LMNA. Phosphorylates substrates involved in capsid assembly and DNA packaging. Facilitates the switch from latent to lytic DNA replication by down-regulating EBNA1 replication function. Phosphorylates the viral immediate-early protein BZLF1 and inhibits its sumoylation by interacting with host SUMO1 and SUMO2. Phosphorylates also host SAMHD1 and thereby counteracts its antiviral effect by reducing its dNTP hydrolase activity. The protein is Serine/threonine-protein kinase BGLF4 of Epstein-Barr virus (strain AG876) (HHV-4).